A 2299-amino-acid polypeptide reads, in one-letter code: Protein Ycf2 (2299 aa).

1642–1649 (GSIGTGRS) is an ATP binding site.

The protein belongs to the Ycf2 family.

It localises to the plastid. Its subcellular location is the chloroplast stroma. Probable ATPase of unknown function. Its presence in a non-photosynthetic plant (Epifagus virginiana) and experiments in tobacco indicate that it has an essential function which is probably not related to photosynthesis. This Nandina domestica (Heavenly bamboo) protein is Protein Ycf2.